We begin with the raw amino-acid sequence, 470 residues long: N amino acid transport system protein (470 aa).

Over residues M1–D11 the composition is skewed to basic and acidic residues. Residues M1–S21 form a disordered region. Over M1–K56 the chain is Extracellular. The next 2 membrane-spanning stretches (helical) occupy residues R57–A77 and F78–I98. The Extracellular portion of the chain corresponds to Y99 to E131. A helical membrane pass occupies residues I132–G152. Over T153–S168 the chain is Cytoplasmic. 2 helical membrane-spanning segments follow: residues L169–A189 and V191–I211. Over A212–D236 the chain is Cytoplasmic. The helical transmembrane segment at L237–M257 threads the bilayer. At C258–S275 the chain is on the extracellular side. Residues I276–A296 traverse the membrane as a helical segment. The Cytoplasmic portion of the chain corresponds to F297–K316. The helical transmembrane segment at V317–V337 threads the bilayer. Topologically, residues S338–P357 are extracellular. The helical transmembrane segment at A358–A378 threads the bilayer. Over E379–D386 the chain is Cytoplasmic. Residues L387–M407 form a helical membrane-spanning segment. The Extracellular portion of the chain corresponds to Y408–A427. The chain crosses the membrane as a helical span at residues L428 to I448. The Cytoplasmic portion of the chain corresponds to Q449–A470.

It belongs to the amino acid/polyamine transporter 2 family.

Its subcellular location is the membrane. Its function is as follows. Required for the transport of neutral aliphatic and aromatic amino acids via the N system. The sequence is that of N amino acid transport system protein (mtr) from Neurospora crassa (strain ATCC 24698 / 74-OR23-1A / CBS 708.71 / DSM 1257 / FGSC 987).